We begin with the raw amino-acid sequence, 216 residues long: Orotate phosphoribosyltransferase (216 aa).

Residue lysine 30 coordinates 5-phospho-alpha-D-ribose 1-diphosphate. Residue 38–39 (FF) participates in orotate binding. Residues 75–76 (YK), arginine 102, lysine 103, lysine 106, histidine 108, and 128–136 (DDVITAGTA) each bind 5-phospho-alpha-D-ribose 1-diphosphate. 2 residues coordinate orotate: threonine 132 and arginine 160.

It belongs to the purine/pyrimidine phosphoribosyltransferase family. PyrE subfamily. As to quaternary structure, homodimer. It depends on Mg(2+) as a cofactor.

It carries out the reaction orotidine 5'-phosphate + diphosphate = orotate + 5-phospho-alpha-D-ribose 1-diphosphate. It participates in pyrimidine metabolism; UMP biosynthesis via de novo pathway; UMP from orotate: step 1/2. In terms of biological role, catalyzes the transfer of a ribosyl phosphate group from 5-phosphoribose 1-diphosphate to orotate, leading to the formation of orotidine monophosphate (OMP). The polypeptide is Orotate phosphoribosyltransferase (Acinetobacter baylyi (strain ATCC 33305 / BD413 / ADP1)).